Consider the following 42-residue polypeptide: Photosystem II reaction center protein J (42 aa).

The helical transmembrane segment at 10-30 (IPLWLIGTVVGSLAIGLLAIF) threads the bilayer.

Belongs to the PsbJ family. In terms of assembly, PSII is composed of 1 copy each of membrane proteins PsbA, PsbB, PsbC, PsbD, PsbE, PsbF, PsbH, PsbI, PsbJ, PsbK, PsbL, PsbM, PsbT, PsbX, PsbY, PsbZ, Psb30/Ycf12, at least 3 peripheral proteins of the oxygen-evolving complex and a large number of cofactors. It forms dimeric complexes.

The protein localises to the plastid. It is found in the chloroplast thylakoid membrane. One of the components of the core complex of photosystem II (PSII). PSII is a light-driven water:plastoquinone oxidoreductase that uses light energy to abstract electrons from H(2)O, generating O(2) and a proton gradient subsequently used for ATP formation. It consists of a core antenna complex that captures photons, and an electron transfer chain that converts photonic excitation into a charge separation. The polypeptide is Photosystem II reaction center protein J (Stigeoclonium helveticum (Green alga)).